The chain runs to 400 residues: Gap junction alpha-8 protein (400 aa).

An intramembrane segment occupies 2 to 12 (GDWSFLGNILE). The Cytoplasmic segment spans residues 13-21 (QVNEQSTVI). Residues 22-42 (GRVWLTVLFIFRILILGTAAE) traverse the membrane as a helical segment. Over 43–71 (LVWGDEQSDFVCNTQQPGCENVCYDEAFP) the chain is Extracellular. Cystine bridges form between cysteine 54-cysteine 196, cysteine 61-cysteine 190, and cysteine 65-cysteine 185. Residues 72–92 (ISHIRLWVLQIIFVSTPSLVY) form a helical membrane-spanning segment. The Cytoplasmic segment spans residues 93 to 156 (FGHAVHHVRM…GTLLRTYILH (64 aa)). The span at 104 to 118 (EKRKEREEAERRQQA) shows a compositional bias: basic and acidic residues. The tract at residues 104–139 (EKRKEREEAERRQQAEVDEEKLPLAPNQNKGNNPDG) is disordered. Residues 129-138 (PNQNKGNNPD) show a composition bias toward polar residues. The chain crosses the membrane as a helical span at residues 157–177 (IIFKTLFEVGFIVGQYFLYGF). Over 178–205 (RILPLYRCGRWPCPNLVDCFVSRPTEKT) the chain is Extracellular. Residues 206–226 (IFIMFMLVVAAVSLFLNLVEI) traverse the membrane as a helical segment. Residues 227-400 (SHLILKRIRR…SRARSDDLTV (174 aa)) lie on the Cytoplasmic side of the membrane. Positions 323–400 (YAQAKEPEEE…SRARSDDLTV (78 aa)) are disordered. Positions 327 to 336 (KEPEEEKVKA) are enriched in basic and acidic residues. The span at 337–346 (EEEEEQEEEQ) shows a compositional bias: acidic residues. The residue at position 364 (serine 364) is a Phosphoserine; by CK2. Positions 381-392 (RSLSRLSKASSR) are enriched in low complexity.

It belongs to the connexin family. Alpha-type (group II) subfamily. As to quaternary structure, a hemichannel or connexon is composed of a hexamer of connexins. A functional gap junction is formed by the apposition of two hemichannels. Forms heteromeric channels with GJA3. During early stages of lens development, interacts with the C-terminus of MIP. Proteolytically cleaved by caspase-3 during lens development. In terms of processing, phosphorylated on Ser-364; which inhibits cleavage by caspase-3.

The protein localises to the cell membrane. Its subcellular location is the cell junction. It is found in the gap junction. Functionally, structural component of eye lens gap junctions. Gap junctions are dodecameric channels that connect the cytoplasm of adjoining cells. They are formed by the docking of two hexameric hemichannels, one from each cell membrane. Small molecules and ions diffuse from one cell to a neighboring cell via the central pore. The protein is Gap junction alpha-8 protein (GJA8) of Gallus gallus (Chicken).